The following is a 98-amino-acid chain: Integration host factor subunit alpha (98 aa).

A disordered region spans residues 54-74 (LRDKASRPGRNPKTGENIPVS).

This sequence belongs to the bacterial histone-like protein family. In terms of assembly, heterodimer of an alpha and a beta chain.

Functionally, this protein is one of the two subunits of integration host factor, a specific DNA-binding protein that functions in genetic recombination as well as in transcriptional and translational control. This is Integration host factor subunit alpha from Actinobacillus succinogenes (strain ATCC 55618 / DSM 22257 / CCUG 43843 / 130Z).